Here is a 209-residue protein sequence, read N- to C-terminus: Uridine kinase (209 aa).

Residue 16 to 23 (GGSGSGKT) coordinates ATP.

This sequence belongs to the uridine kinase family.

It is found in the cytoplasm. The catalysed reaction is uridine + ATP = UMP + ADP + H(+). The enzyme catalyses cytidine + ATP = CMP + ADP + H(+). Its pathway is pyrimidine metabolism; CTP biosynthesis via salvage pathway; CTP from cytidine: step 1/3. It participates in pyrimidine metabolism; UMP biosynthesis via salvage pathway; UMP from uridine: step 1/1. This Lactiplantibacillus plantarum (strain ATCC BAA-793 / NCIMB 8826 / WCFS1) (Lactobacillus plantarum) protein is Uridine kinase.